The chain runs to 162 residues: Disulfide bond formation protein B (162 aa).

Residues 1–4 (MRII) are Cytoplasmic-facing. Residues 5-21 (FLLIFLACAGLIGYALY) form a helical membrane-spanning segment. Residues 22–39 (LQLMDGLLPCPLCIFQRI) lie on the Periplasmic side of the membrane. A disulfide bond links C31 and C34. Residues 40–56 (AYWLIGITALFTFIHNP) traverse the membrane as a helical segment. At 57 to 62 (QSLGQH) the chain is on the cytoplasmic side. A helical membrane pass occupies residues 63–80 (IYYGLIILFSLAGAIVAG). Topologically, residues 81 to 136 (RQAWLIRFPEAFECGISPEEAFLNGLPLAQWWPNMFEANGDCNDGTWQFLSLTLPD) are periplasmic. A disulfide bridge links C94 with C122. A helical membrane pass occupies residues 137-155 (WSLLIFAAFGIIAGLLWHK). At 156–162 (KYNSINQ) the chain is on the cytoplasmic side.

Belongs to the DsbB family.

It is found in the cell inner membrane. Required for disulfide bond formation in some periplasmic proteins. Acts by oxidizing the DsbA protein. The chain is Disulfide bond formation protein B from Nitrosomonas eutropha (strain DSM 101675 / C91 / Nm57).